A 210-amino-acid polypeptide reads, in one-letter code: Thiamine-phosphate synthase (210 aa).

Residues 39–43 and asparagine 71 each bind 4-amino-2-methyl-5-(diphosphooxymethyl)pyrimidine; that span reads QLREK. Positions 72 and 91 each coordinate Mg(2+). Serine 110 lines the 4-amino-2-methyl-5-(diphosphooxymethyl)pyrimidine pocket. 136–138 serves as a coordination point for 2-[(2R,5Z)-2-carboxy-4-methylthiazol-5(2H)-ylidene]ethyl phosphate; it reads TST. Position 139 (lysine 139) interacts with 4-amino-2-methyl-5-(diphosphooxymethyl)pyrimidine. 2-[(2R,5Z)-2-carboxy-4-methylthiazol-5(2H)-ylidene]ethyl phosphate contacts are provided by residues glycine 166 and 186–187; that span reads VS.

This sequence belongs to the thiamine-phosphate synthase family. The cofactor is Mg(2+).

The catalysed reaction is 2-[(2R,5Z)-2-carboxy-4-methylthiazol-5(2H)-ylidene]ethyl phosphate + 4-amino-2-methyl-5-(diphosphooxymethyl)pyrimidine + 2 H(+) = thiamine phosphate + CO2 + diphosphate. It carries out the reaction 2-(2-carboxy-4-methylthiazol-5-yl)ethyl phosphate + 4-amino-2-methyl-5-(diphosphooxymethyl)pyrimidine + 2 H(+) = thiamine phosphate + CO2 + diphosphate. The enzyme catalyses 4-methyl-5-(2-phosphooxyethyl)-thiazole + 4-amino-2-methyl-5-(diphosphooxymethyl)pyrimidine + H(+) = thiamine phosphate + diphosphate. Its pathway is cofactor biosynthesis; thiamine diphosphate biosynthesis; thiamine phosphate from 4-amino-2-methyl-5-diphosphomethylpyrimidine and 4-methyl-5-(2-phosphoethyl)-thiazole: step 1/1. Condenses 4-methyl-5-(beta-hydroxyethyl)thiazole monophosphate (THZ-P) and 2-methyl-4-amino-5-hydroxymethyl pyrimidine pyrophosphate (HMP-PP) to form thiamine monophosphate (TMP). This is Thiamine-phosphate synthase from Ruminiclostridium cellulolyticum (strain ATCC 35319 / DSM 5812 / JCM 6584 / H10) (Clostridium cellulolyticum).